A 316-amino-acid chain; its full sequence is SWR complex protein 2 (316 aa).

Disordered regions lie at residues 1 to 81 (MSAT…GEEV), 93 to 127 (KRKI…KKKY), and 153 to 180 (ETRL…TMTQ). Residues 20–31 (KMRELLEKEHLR) are compositionally biased toward basic and acidic residues. Residues 20–95 (KMRELLEKEH…RDEERIKKRK (76 aa)) are a coiled coil. A compositionally biased stretch (acidic residues) spans 40–56 (EKEDEEYNIEEEEEAER). Phosphoserine is present on residues Ser64 and Ser65. Residues 70–81 (ELKKLEEEGEEV) are compositionally biased toward basic and acidic residues. Residues 167–180 (VSASANRQKGTMTQ) show a composition bias toward polar residues.

The protein belongs to the VPS72/YL1 family. Component of the SWR1 chromatin-remodeling complex.

The protein localises to the nucleus. Its function is as follows. Participates in the catalytic exchange of histone H2A for the H2A variant pht1, an euchromatin-specific factor, leading to chromatin remodeling and changes in transcription of targeted genes. The chain is SWR complex protein 2 (swc2) from Schizosaccharomyces pombe (strain 972 / ATCC 24843) (Fission yeast).